Reading from the N-terminus, the 207-residue chain is Uridine kinase (207 aa).

11–18 contacts ATP; sequence GGSGSGKT.

It belongs to the uridine kinase family.

The protein localises to the cytoplasm. The enzyme catalyses uridine + ATP = UMP + ADP + H(+). The catalysed reaction is cytidine + ATP = CMP + ADP + H(+). The protein operates within pyrimidine metabolism; CTP biosynthesis via salvage pathway; CTP from cytidine: step 1/3. Its pathway is pyrimidine metabolism; UMP biosynthesis via salvage pathway; UMP from uridine: step 1/1. In Staphylococcus haemolyticus (strain JCSC1435), this protein is Uridine kinase.